A 96-amino-acid polypeptide reads, in one-letter code: Molybdopterin synthase sulfur carrier subunit (96 aa).

Position 96 is a 1-thioglycine; alternate (Gly96). Position 96 is a glycyl adenylate; alternate (Gly96).

Belongs to the MoaD family. MOCS2A subfamily. In terms of assembly, heterotetramer; composed of 2 small (MOCS2A) and 2 large (MOCS2B) subunits. C-terminal thiocarboxylation occurs in 2 steps, it is first acyl-adenylated (-COAMP) via the hesA/moeB/thiF part of UBA4, then thiocarboxylated (-COSH) via the rhodanese domain of UBA4.

The protein resides in the cytoplasm. The protein operates within cofactor biosynthesis; molybdopterin biosynthesis. Functionally, acts as a sulfur carrier required for molybdopterin biosynthesis. Component of the molybdopterin synthase complex that catalyzes the conversion of precursor Z into molybdopterin by mediating the incorporation of 2 sulfur atoms into precursor Z to generate a dithiolene group. In the complex, serves as sulfur donor by being thiocarboxylated (-COSH) at its C-terminus by UBA4. After interaction with MOCS2B, the sulfur is then transferred to precursor Z to form molybdopterin. The chain is Molybdopterin synthase sulfur carrier subunit from Phaeosphaeria nodorum (strain SN15 / ATCC MYA-4574 / FGSC 10173) (Glume blotch fungus).